A 332-amino-acid chain; its full sequence is Ornithine carbamoyltransferase, catabolic (332 aa).

Carbamoyl phosphate-binding positions include S60–T63, Q87, R111, and H138–Q141. Residues N170, D230, and S234–M235 contribute to the L-ornithine site. Residues C271–L272 and R316 each bind carbamoyl phosphate.

It belongs to the aspartate/ornithine carbamoyltransferase superfamily. OTCase family.

The protein localises to the cytoplasm. The catalysed reaction is carbamoyl phosphate + L-ornithine = L-citrulline + phosphate + H(+). It functions in the pathway amino-acid degradation; L-arginine degradation via ADI pathway; carbamoyl phosphate from L-arginine: step 2/2. Functionally, reversibly catalyzes the transfer of the carbamoyl group from carbamoyl phosphate (CP) to the N(epsilon) atom of ornithine (ORN) to produce L-citrulline. The protein is Ornithine carbamoyltransferase, catabolic of Bacillus thuringiensis subsp. konkukian (strain 97-27).